A 538-amino-acid chain; its full sequence is Putative outer membrane porin BglH (538 aa).

Positions 1–25 (MFRRNIITSAILLMAPLAFSAQSLA) are cleaved as a signal peptide.

This sequence belongs to the porin LamB (TC 1.B.3) family.

The protein localises to the cell outer membrane. In terms of biological role, may be a sugar porin with a broad carbohydrate specificity. The sequence is that of Putative outer membrane porin BglH (bglH) from Escherichia coli O6:K15:H31 (strain 536 / UPEC).